A 91-amino-acid polypeptide reads, in one-letter code: Large ribosomal subunit protein uL22 (91 aa).

It belongs to the universal ribosomal protein uL22 family. In terms of assembly, part of the 50S ribosomal subunit.

Its function is as follows. This protein binds specifically to 23S rRNA; its binding is stimulated by other ribosomal proteins, e.g. L4, L17, and L20. It is important during the early stages of 50S assembly. It makes multiple contacts with different domains of the 23S rRNA in the assembled 50S subunit and ribosome. In terms of biological role, the globular domain of the protein is located near the polypeptide exit tunnel on the outside of the subunit, while an extended beta-hairpin is found that lines the wall of the exit tunnel in the center of the 70S ribosome. This Clover yellow edge phytoplasma protein is Large ribosomal subunit protein uL22 (rplV).